We begin with the raw amino-acid sequence, 138 residues long: Large ribosomal subunit protein uL16 (138 aa).

It belongs to the universal ribosomal protein uL16 family. In terms of assembly, part of the 50S ribosomal subunit.

Binds 23S rRNA and is also seen to make contacts with the A and possibly P site tRNAs. The sequence is that of Large ribosomal subunit protein uL16 from Rhodospirillum rubrum (strain ATCC 11170 / ATH 1.1.1 / DSM 467 / LMG 4362 / NCIMB 8255 / S1).